Consider the following 366-residue polypeptide: Aliphatic nitrilase (366 aa).

A CN hydrolase domain is found at 8–282 (FKVAAVQAQP…EGILYADIDL (275 aa)). Residue E48 is the Proton acceptor of the active site. Catalysis depends on K131, which acts as the Proton donor. C165 serves as the catalytic Nucleophile. Residues 346–366 (DEQRALPSTHSDETDRATASI) are disordered. Residues 355–366 (HSDETDRATASI) are compositionally biased toward basic and acidic residues.

Belongs to the carbon-nitrogen hydrolase superfamily. Nitrilase family. In terms of assembly, homodimer.

It carries out the reaction an aliphatic nitrile + 2 H2O = a carboxylate + NH4(+). This chain is Aliphatic nitrilase (nitA), found in Rhodococcus rhodochrous.